The sequence spans 506 residues: Histidine ammonia-lyase (506 aa).

The 5-imidazolinone (Ala-Gly) cross-link spans 143 to 145; sequence ASG. Ser144 carries the post-translational modification 2,3-didehydroalanine (Ser).

It belongs to the PAL/histidase family. In terms of processing, contains an active site 4-methylidene-imidazol-5-one (MIO), which is formed autocatalytically by cyclization and dehydration of residues Ala-Ser-Gly.

The protein localises to the cytoplasm. The catalysed reaction is L-histidine = trans-urocanate + NH4(+). The protein operates within amino-acid degradation; L-histidine degradation into L-glutamate; N-formimidoyl-L-glutamate from L-histidine: step 1/3. The chain is Histidine ammonia-lyase from Citrobacter koseri (strain ATCC BAA-895 / CDC 4225-83 / SGSC4696).